The sequence spans 213 residues: MKAFQRDFIEFAIERGVLKFGEFTLKSGRVSPYFFNAGLFNRGGDLAKLGRFYANALMDAGVEFNVLFGPAYKGIPIATTTAVALADNHNLDVPYCFNRKEAKTHGEGGNLVGSPLEGKVMLVDDVITAGTAIRESMTLIEQQQASLSGVLIALDRQERGKGELSAIQEVERDFNTQVISIVSLADVVSYLGEKGGFDNEIAAINTYRENYGI.

Lys26 provides a ligand contact to 5-phospho-alpha-D-ribose 1-diphosphate. Orotate is bound at residue 34-35; it reads FF. 5-phospho-alpha-D-ribose 1-diphosphate is bound by residues 72–73, Arg99, Lys100, Lys103, His105, and 124–132; these read YK and DDVITAGTA. Orotate is bound by residues Thr128 and Arg156.

The protein belongs to the purine/pyrimidine phosphoribosyltransferase family. PyrE subfamily. In terms of assembly, homodimer. Requires Mg(2+) as cofactor.

The catalysed reaction is orotidine 5'-phosphate + diphosphate = orotate + 5-phospho-alpha-D-ribose 1-diphosphate. Its pathway is pyrimidine metabolism; UMP biosynthesis via de novo pathway; UMP from orotate: step 1/2. In terms of biological role, catalyzes the transfer of a ribosyl phosphate group from 5-phosphoribose 1-diphosphate to orotate, leading to the formation of orotidine monophosphate (OMP). The protein is Orotate phosphoribosyltransferase of Alteromonas mediterranea (strain DSM 17117 / CIP 110805 / LMG 28347 / Deep ecotype).